The sequence spans 645 residues: uncharacterized protein (645 aa).

The first 23 residues, 1–23, serve as a signal peptide directing secretion; it reads MPSSHRLSATILIFLSLTYISSS. Disordered stretches follow at residues 30-58 and 92-129; these read ITDK…TTAS and NSNA…AGIP. A compositionally biased stretch (polar residues) spans 92–102; sequence NSNANPYFSTT. N-linked (GlcNAc...) asparagine glycosylation occurs at asparagine 107. Over residues 107–119 the composition is skewed to basic and acidic residues; the sequence is NRSDSSQKARDPD. In terms of domain architecture, PAN 1 spans 135-214; sequence CFRRYENSII…QTRDYFEPTD (80 aa). Intrachain disulfides connect cysteine 161–cysteine 187 and cysteine 165–cysteine 175. The disordered stretch occupies residues 225–247; that stretch reads ESSSSAPSSEDEDSPPSPPPSAP. 2 PAN domains span residues 281-369 and 378-465; these read CPRG…EKIC and CPST…EVEC. Intrachain disulfides connect cysteine 281/cysteine 369, cysteine 313/cysteine 341, cysteine 317/cysteine 329, cysteine 378/cysteine 465, cysteine 407/cysteine 436, and cysteine 411/cysteine 422. Residue asparagine 421 is glycosylated (N-linked (GlcNAc...) asparagine). Over residues 556–567 the composition is skewed to basic and acidic residues; the sequence is AGELENNDHEQI. Residues 556-582 are disordered; sequence AGELENNDHEQIEDNNTDASEDPVPTK. Asparagine 570 carries N-linked (GlcNAc...) asparagine glycosylation.

This is an uncharacterized protein from Caenorhabditis elegans.